The primary structure comprises 1241 residues: ATP-dependent helicase/nuclease subunit A (1241 aa).

The UvrD-like helicase ATP-binding domain occupies Ser-12–Arg-485. Residue Ala-33–Thr-40 participates in ATP binding. A UvrD-like helicase C-terminal domain is found at Gly-505 to Gly-805.

Belongs to the helicase family. AddA subfamily. Heterodimer of AddA and AddB/RexB. Mg(2+) serves as cofactor.

It catalyses the reaction Couples ATP hydrolysis with the unwinding of duplex DNA by translocating in the 3'-5' direction.. The catalysed reaction is ATP + H2O = ADP + phosphate + H(+). In terms of biological role, the heterodimer acts as both an ATP-dependent DNA helicase and an ATP-dependent, dual-direction single-stranded exonuclease. Recognizes the chi site generating a DNA molecule suitable for the initiation of homologous recombination. The AddA nuclease domain is required for chi fragment generation; this subunit has the helicase and 3' -&gt; 5' nuclease activities. The chain is ATP-dependent helicase/nuclease subunit A from Bacillus cereus (strain ATCC 10987 / NRS 248).